Here is a 598-residue protein sequence, read N- to C-terminus: 2-succinyl-5-enolpyruvyl-6-hydroxy-3-cyclohexene-1-carboxylate synthase (598 aa).

It belongs to the TPP enzyme family. MenD subfamily. Homodimer. Mg(2+) serves as cofactor. It depends on Mn(2+) as a cofactor. The cofactor is thiamine diphosphate.

It catalyses the reaction isochorismate + 2-oxoglutarate + H(+) = 5-enolpyruvoyl-6-hydroxy-2-succinyl-cyclohex-3-ene-1-carboxylate + CO2. It functions in the pathway quinol/quinone metabolism; 1,4-dihydroxy-2-naphthoate biosynthesis; 1,4-dihydroxy-2-naphthoate from chorismate: step 2/7. Its pathway is cofactor biosynthesis; phylloquinone biosynthesis. Functionally, catalyzes the thiamine diphosphate-dependent decarboxylation of 2-oxoglutarate and the subsequent addition of the resulting succinic semialdehyde-thiamine pyrophosphate anion to isochorismate to yield 2-succinyl-5-enolpyruvyl-6-hydroxy-3-cyclohexene-1-carboxylate (SEPHCHC). The sequence is that of 2-succinyl-5-enolpyruvyl-6-hydroxy-3-cyclohexene-1-carboxylate synthase from Prochlorococcus marinus (strain NATL2A).